A 358-amino-acid polypeptide reads, in one-letter code: Probable tartrate dehydrogenase/decarboxylase TtuC' (358 aa).

D222, D246, and D250 together coordinate Mn(2+).

Belongs to the isocitrate and isopropylmalate dehydrogenases family. Mg(2+) serves as cofactor. Mn(2+) is required as a cofactor. The cofactor is K(+).

The protein localises to the cytoplasm. The catalysed reaction is tartrate + NAD(+) = 2-hydroxy-3-oxosuccinate + NADH + H(+). It catalyses the reaction (2R,3S)-tartrate + NAD(+) = 2-hydroxy-3-oxosuccinate + NADH + H(+). The enzyme catalyses (2R,3R)-tartrate + NAD(+) = 2-hydroxy-3-oxosuccinate + NADH + H(+). It carries out the reaction (2R,3R)-tartrate + H(+) = (R)-glycerate + CO2. The catalysed reaction is (R)-malate + NAD(+) = pyruvate + CO2 + NADH. It functions in the pathway carbohydrate acid metabolism; tartrate degradation; 2-hydroxy-3-oxosuccinate from L-tartrate: step 1/1. The protein operates within carbohydrate acid metabolism; tartrate degradation; 2-hydroxy-3-oxosuccinate from meso-tartrate: step 1/1. It participates in carbohydrate acid metabolism; tartrate degradation; D-glycerate from L-tartrate: step 1/1. In terms of biological role, has multiple catalytic activities. Apart from catalyzing the oxidation of (+)-tartrate to oxaloglycolate, also converts meso-tartrate to D-glycerate and catalyzes the oxidative decarboxylation of D-malate to pyruvate. The chain is Probable tartrate dehydrogenase/decarboxylase TtuC' (ttuC') from Agrobacterium vitis (Rhizobium vitis).